The sequence spans 256 residues: Ribonuclease 3 (256 aa).

Positions 3-125 (LDALQQRLGY…IVGAVFLDAG (123 aa)) constitute an RNase III domain. Glu38 is a binding site for Mg(2+). Asp42 is an active-site residue. Mg(2+) contacts are provided by Asp111 and Glu114. Glu114 is a catalytic residue. One can recognise a DRBM domain in the interval 152 to 222 (DAKTLLQEYL…AKLALDEVQK (71 aa)). The segment at 230–256 (RSRAERTGKTRKQPVPQDPQLSLRLKE) is disordered.

Belongs to the ribonuclease III family. In terms of assembly, homodimer. Mg(2+) serves as cofactor.

It localises to the cytoplasm. It carries out the reaction Endonucleolytic cleavage to 5'-phosphomonoester.. Digests double-stranded RNA. Involved in the processing of primary rRNA transcript to yield the immediate precursors to the large and small rRNAs (23S and 16S). Processes some mRNAs, and tRNAs when they are encoded in the rRNA operon. Processes pre-crRNA and tracrRNA of type II CRISPR loci if present in the organism. This Cupriavidus necator (strain ATCC 17699 / DSM 428 / KCTC 22496 / NCIMB 10442 / H16 / Stanier 337) (Ralstonia eutropha) protein is Ribonuclease 3.